The following is a 955-amino-acid chain: UPF0182 protein tll1193 (955 aa).

9 consecutive transmembrane segments (helical) span residues 6 to 26 (VVPLMPPWLRWLCGLVLAIAL), 53 to 73 (WSVQALLFLAVAGVSQLFYGC), 98 to 118 (GLGLWQLLLCAGSLNWLLIVA), 163 to 183 (WLLGLSLVAVILGLWLPVGLF), 186 to 206 (LGILLSLAMGAIASLSWPVVL), 240 to 260 (LWLVNLSVVGLGGTTLGYLLA), 280 to 300 (LQGLSAFVFATVALSFWLERY), 324 to 344 (LYGWLSASAFGVACLLAWSAI), and 354 to 374 (GPIAPGLFGFTLGYLGVILIV).

It belongs to the UPF0182 family.

It localises to the cell membrane. The polypeptide is UPF0182 protein tll1193 (Thermosynechococcus vestitus (strain NIES-2133 / IAM M-273 / BP-1)).